Consider the following 99-residue polypeptide: uncharacterized protein (99 aa).

Positions M1–G17 are cleaved as a signal peptide. C18 carries N-palmitoyl cysteine lipidation. C18 is lipidated: S-diacylglycerol cysteine.

The protein localises to the cell membrane. This is an uncharacterized protein from Escherichia coli (strain UTI89 / UPEC).